Reading from the N-terminus, the 156-residue chain is Ribonuclease pancreatic (156 aa).

The signal sequence occupies residues 1–28; the sequence is MALEKSLVLLPLLVLILLVLGWVQPSLG. Residues K35 and R38 each contribute to the substrate site. Catalysis depends on H40, which acts as the Proton acceptor. Residues N50 and N62 are each glycosylated (N-linked (GlcNAc...) asparagine). Disulfide bonds link C54/C112, C68/C123, C86/C138, and C93/C100. Substrate-binding positions include 69 to 73 and K94; that span reads KPVNT. Residue N104 is glycosylated (N-linked (GlcNAc...) asparagine). Position 113 (R113) interacts with substrate. The active-site Proton donor is H147.

It belongs to the pancreatic ribonuclease family. In terms of assembly, monomer. Interacts with and forms tight 1:1 complexes with RNH1. Dimerization of two such complexes may occur. Interaction with RNH1 inhibits this protein. Pancreas and other tissues and body fluids (indicating it may have other physiological functions besides its role in digestion).

The protein localises to the secreted. The enzyme catalyses an [RNA] containing cytidine + H2O = an [RNA]-3'-cytidine-3'-phosphate + a 5'-hydroxy-ribonucleotide-3'-[RNA].. It catalyses the reaction an [RNA] containing uridine + H2O = an [RNA]-3'-uridine-3'-phosphate + a 5'-hydroxy-ribonucleotide-3'-[RNA].. In terms of biological role, endonuclease that catalyzes the cleavage of RNA on the 3' side of pyrimidine nucleotides. Acts on single-stranded and double-stranded RNA. This is Ribonuclease pancreatic (RNASE1) from Pongo pygmaeus (Bornean orangutan).